The chain runs to 894 residues: Mitogen-activated protein kinase kinase kinase kinase 3 (894 aa).

Position 1 is an N-acetylmethionine (Met1). Residues 16 to 273 (FELIQRIGSG…AEKLLQHPFV (258 aa)) form the Protein kinase domain. ATP is bound by residues 22–30 (IGSGTYGDV) and Lys45. Asp136 functions as the Proton acceptor in the catalytic mechanism. Ser329 bears the Phosphoserine mark. A disordered region spans residues 339 to 358 (DPPLRKETEPHHELPDSDGF). Residues 340-353 (PPLRKETEPHHELP) are compositionally biased toward basic and acidic residues. Ser398 bears the Phosphoserine mark. Residues 408 to 537 (HVAHLEDDEG…VPKPISNGLP (130 aa)) are disordered. Residues 473–487 (HVPPRPPPPRLPPQK) show a composition bias toward pro residues. Over residues 508 to 520 (LYQQQSEQRGTNL) the composition is skewed to polar residues. The 312-residue stretch at 556–867 (PLKIHCATSW…IFRLLGSDRV (312 aa)) folds into the CNH domain.

Belongs to the protein kinase superfamily. STE Ser/Thr protein kinase family. STE20 subfamily. As to quaternary structure, interacts with SH3GL2. Interaction appears to regulate MAP4K3-mediated JNK activation. It depends on Mg(2+) as a cofactor.

The catalysed reaction is L-seryl-[protein] + ATP = O-phospho-L-seryl-[protein] + ADP + H(+). It catalyses the reaction L-threonyl-[protein] + ATP = O-phospho-L-threonyl-[protein] + ADP + H(+). Its function is as follows. Serine/threonine kinase that plays a role in the response to environmental stress. Appears to act upstream of the JUN N-terminal pathway. Activator of the Hippo signaling pathway which plays a pivotal role in organ size control and tumor suppression by restricting proliferation and promoting apoptosis. MAP4Ks act in parallel to and are partially redundant with STK3/MST2 and STK4/MST2 in the phosphorylation and activation of LATS1/2, and establish MAP4Ks as components of the expanded Hippo pathway. This Mus musculus (Mouse) protein is Mitogen-activated protein kinase kinase kinase kinase 3 (Map4k3).